Consider the following 271-residue polypeptide: Phosphatidylglycerol--prolipoprotein diacylglyceryl transferase (271 aa).

7 helical membrane passes run 25 to 45, 60 to 80, 103 to 123, 134 to 154, 181 to 201, 209 to 229, and 235 to 255; these read WYGIMYVIALLLALLLAKFFV, YFIWVEIGVILGARLGYILIY, FVGIRGMSYHGAIIGFLIATL, WIFLDLVALSVPLAYVFGRIG, PSQLYEAFLEGIVVFIIVYLA, GELILVYAGAYSLARFICEFY, and GIGFVLWGMSMGQILSFIMFI. R152 is a binding site for a 1,2-diacyl-sn-glycero-3-phospho-(1'-sn-glycerol).

Belongs to the Lgt family.

The protein resides in the cell inner membrane. It carries out the reaction L-cysteinyl-[prolipoprotein] + a 1,2-diacyl-sn-glycero-3-phospho-(1'-sn-glycerol) = an S-1,2-diacyl-sn-glyceryl-L-cysteinyl-[prolipoprotein] + sn-glycerol 1-phosphate + H(+). It participates in protein modification; lipoprotein biosynthesis (diacylglyceryl transfer). Its function is as follows. Catalyzes the transfer of the diacylglyceryl group from phosphatidylglycerol to the sulfhydryl group of the N-terminal cysteine of a prolipoprotein, the first step in the formation of mature lipoproteins. This chain is Phosphatidylglycerol--prolipoprotein diacylglyceryl transferase, found in Campylobacter jejuni subsp. jejuni serotype O:23/36 (strain 81-176).